A 340-amino-acid polypeptide reads, in one-letter code: MFMKTDDFDYKLPEELIASYPLENRDASRLLKLNKQTGEIADYKFTDFIDFINPGDLLVFNNSKVMLARLYGSKTTGAKLEYLIERIKNPKLFETHIKANRSPAIGSEIYVEDTLAKVLDKDGGMYLLEIQGDKDIYQLMEEFGHIPLPPYMKRDDEEFDAERYQTVYAQDLGSVAALTAGLHFSKELMQQIKDKGVDIAYITLHVGSGTFKPVQVDDVESHKMHAEVISVPVEVCQKIRQTKENGGRVITIGTTSVRSLETAGQNGQIEPYQGETDIFLYPGKKFNVVDAMITNFHLPKSTLIMLVSAFADKEKIIKAYEHAIAERYRFFSYGDAMFIF.

This sequence belongs to the QueA family. As to quaternary structure, monomer.

It is found in the cytoplasm. The catalysed reaction is 7-aminomethyl-7-carbaguanosine(34) in tRNA + S-adenosyl-L-methionine = epoxyqueuosine(34) in tRNA + adenine + L-methionine + 2 H(+). Its pathway is tRNA modification; tRNA-queuosine biosynthesis. Its function is as follows. Transfers and isomerizes the ribose moiety from AdoMet to the 7-aminomethyl group of 7-deazaguanine (preQ1-tRNA) to give epoxyqueuosine (oQ-tRNA). This Francisella tularensis subsp. holarctica (strain OSU18) protein is S-adenosylmethionine:tRNA ribosyltransferase-isomerase.